A 346-amino-acid chain; its full sequence is Biotin synthase (346 aa).

In terms of domain architecture, Radical SAM core spans 38-256 (RQVQVSTLLS…IAVARIMMPT (219 aa)). Positions 53, 57, and 60 each coordinate [4Fe-4S] cluster. [2Fe-2S] cluster contacts are provided by Cys97, Cys128, Cys188, and Arg260.

This sequence belongs to the radical SAM superfamily. Biotin synthase family. Homodimer. It depends on [4Fe-4S] cluster as a cofactor. [2Fe-2S] cluster serves as cofactor.

It catalyses the reaction (4R,5S)-dethiobiotin + (sulfur carrier)-SH + 2 reduced [2Fe-2S]-[ferredoxin] + 2 S-adenosyl-L-methionine = (sulfur carrier)-H + biotin + 2 5'-deoxyadenosine + 2 L-methionine + 2 oxidized [2Fe-2S]-[ferredoxin]. Its pathway is cofactor biosynthesis; biotin biosynthesis; biotin from 7,8-diaminononanoate: step 2/2. Catalyzes the conversion of dethiobiotin (DTB) to biotin by the insertion of a sulfur atom into dethiobiotin via a radical-based mechanism. The protein is Biotin synthase of Escherichia coli (strain K12 / DH10B).